The sequence spans 326 residues: Putative ubiquitin-conjugating enzyme E2 38 (326 aa).

Residues 54 to 214 (NWVKKVQDEW…VFLLSLKTMV (161 aa)) enclose the UBC core domain. Cys-140 functions as the Glycyl thioester intermediate in the catalytic mechanism. Residues 297 to 326 (LAEKPKPPVNNANTENQSKKKTRKRSRSSR) are disordered. Residues 315–326 (KKKTRKRSRSSR) show a composition bias toward basic residues.

It belongs to the ubiquitin-conjugating enzyme family.

It catalyses the reaction S-ubiquitinyl-[E1 ubiquitin-activating enzyme]-L-cysteine + [E2 ubiquitin-conjugating enzyme]-L-cysteine = [E1 ubiquitin-activating enzyme]-L-cysteine + S-ubiquitinyl-[E2 ubiquitin-conjugating enzyme]-L-cysteine.. The protein operates within protein modification; protein ubiquitination. Accepts the ubiquitin from the E1 complex and catalyzes its covalent attachment to other proteins. The sequence is that of Putative ubiquitin-conjugating enzyme E2 38 (UBC38) from Arabidopsis thaliana (Mouse-ear cress).